The following is an 80-amino-acid chain: Exodeoxyribonuclease 7 small subunit (80 aa).

The protein belongs to the XseB family. Heterooligomer composed of large and small subunits.

Its subcellular location is the cytoplasm. It carries out the reaction Exonucleolytic cleavage in either 5'- to 3'- or 3'- to 5'-direction to yield nucleoside 5'-phosphates.. In terms of biological role, bidirectionally degrades single-stranded DNA into large acid-insoluble oligonucleotides, which are then degraded further into small acid-soluble oligonucleotides. The sequence is that of Exodeoxyribonuclease 7 small subunit from Pseudomonas fluorescens (strain ATCC BAA-477 / NRRL B-23932 / Pf-5).